Here is a 248-residue protein sequence, read N- to C-terminus: MIICKTPRELGIMREAGRIVALTHEELKKHIKPGISTKELDQIAERFIKKQGAIPSFKGYNGFRGSICVSVNEELVHGIPGSRVLKDGDIISIDIGAKLNGYHGDSAWTYPVGNISDDDKKLLEVTEESLYKGLQEAKPGERLSNISHAIQTYVENEQFSVVREYVGHGVGQDLHEDPQIPHYGPPNKGPRLKPGMVLAIEPMVNAGSRYVKTLADNWTVVTVDGKKCAHFEHTIAITETGFDILTRV.

Histidine 77 is a substrate binding site. Residues aspartate 94, aspartate 105, and histidine 168 each coordinate a divalent metal cation. Histidine 175 lines the substrate pocket. Residues glutamate 201 and glutamate 232 each contribute to the a divalent metal cation site.

As to quaternary structure, monomer. Co(2+) serves as cofactor. The cofactor is Zn(2+). Mn(2+) is required as a cofactor. It depends on Fe(2+) as a cofactor.

Its subcellular location is the cytoplasm. The enzyme catalyses Release of N-terminal amino acids, preferentially methionine, from peptides and arylamides.. In terms of biological role, removes the N-terminal methionine from nascent proteins. The N-terminal methionine is often cleaved when the second residue in the primary sequence is small and uncharged (Met-Ala-, Cys, Gly, Pro, Ser, Thr, or Val). Requires deformylation of the N(alpha)-formylated initiator methionine before it can be hydrolyzed. This Bacillus subtilis (strain 168) protein is Methionine aminopeptidase 1.